The primary structure comprises 90 residues: MHLSLARSAVLILLLLFALGNFVGVQPGQITRDADHGINLRSLRKQMSRSPLVKGAFCGQACSSVKCPKKCFCHPEEKVCYREMRTKERD.

The signal sequence occupies residues 1–20 (MHLSLARSAVLILLLLFALG). A propeptide spanning residues 21–60 (NFVGVQPGQITRDADHGINLRSLRKQMSRSPLVKGAFCGQ) is cleaved from the precursor. 3 disulfide bridges follow: cysteine 58–cysteine 71, cysteine 62–cysteine 73, and cysteine 67–cysteine 80.

Belongs to the conotoxin P superfamily. In terms of tissue distribution, expressed by the venom duct.

It is found in the secreted. Functionally, probable neurotoxin that inhibits ion channels. In Conus regius (Crown cone), this protein is Conotoxin Rg9.1.